The following is a 67-amino-acid chain: Phycobilisome 7.8 kDa linker polypeptide, allophycocyanin-associated, core (67 aa).

The CpcD-like domain occupies Met1–Ala56.

This sequence belongs to the phycobilisome linker protein family.

Its subcellular location is the cellular thylakoid membrane. Functionally, rod linker protein, associated with allophycocyanin. Linker polypeptides determine the state of aggregation and the location of the disk-shaped phycobiliprotein units within the phycobilisome and modulate their spectroscopic properties in order to mediate a directed and optimal energy transfer. The sequence is that of Phycobilisome 7.8 kDa linker polypeptide, allophycocyanin-associated, core (apcC) from Synechocystis sp. (strain PCC 6714) (Aphanocapsa sp. (strain PCC 6714)).